The sequence spans 303 residues: Inner kinetochore subunit mal2 (303 aa).

Belongs to the CENP-O/MCM21 family. Component of the heterotetrameric kinetochore subcomplex COMA, which consists of fta2, fta7, mal2 and mis17. The COMA subcomplex is part of a larger constitutive centromere-associated network (CCAN) (also known as central kinetochore Sim4 complex in fission yeast), which is composed of at least cnl2, cnp3, cnp20, fta1, fta2, fta3, fta4, fta6, fta7, mal2, mhf1, mhf2, mis6, mis15, mis17, sim4 and wip1.

The protein resides in the nucleus. The protein localises to the chromosome. It localises to the centromere. Its subcellular location is the kinetochore. Its function is as follows. Component of the kinetochore, a multiprotein complex that assembles on centromeric DNA and attaches chromosomes to spindle microtubules, mediating chromosome segregation and sister chromatid segregation during meiosis and mitosis. Component of the inner kinetochore COMA complex, which connects centromere-associated proteins and the outer kinetochore. COMA interacts with other inner kinetochore proteins to form the inner kinetochore constitutive centromere-associated network (CCAN), which serves as a structural platform for outer kinetochore assembly. The sequence is that of Inner kinetochore subunit mal2 (mal2) from Schizosaccharomyces pombe (strain 972 / ATCC 24843) (Fission yeast).